The sequence spans 403 residues: Phosphoglycerate kinase (403 aa).

Residues 22–24, R37, 60–63, R119, and R156 each bind substrate; these read DLN and HLGR. ATP contacts are provided by residues K206, G302, E333, and 359 to 362; that span reads GGDS.

Belongs to the phosphoglycerate kinase family. As to quaternary structure, monomer.

The protein localises to the cytoplasm. The enzyme catalyses (2R)-3-phosphoglycerate + ATP = (2R)-3-phospho-glyceroyl phosphate + ADP. It functions in the pathway carbohydrate degradation; glycolysis; pyruvate from D-glyceraldehyde 3-phosphate: step 2/5. The sequence is that of Phosphoglycerate kinase from Streptomyces griseus subsp. griseus (strain JCM 4626 / CBS 651.72 / NBRC 13350 / KCC S-0626 / ISP 5235).